A 1028-amino-acid chain; its full sequence is Beta-galactosidase (1028 aa).

Positions 104 and 203 each coordinate substrate. Na(+) is bound at residue aspartate 203. Glutamate 418, histidine 420, and glutamate 463 together coordinate Mg(2+). Substrate is bound by residues glutamate 463 and 539 to 542; that span reads EYAH. Catalysis depends on glutamate 463, which acts as the Proton donor. Glutamate 539 (nucleophile) is an active-site residue. Position 599 (asparagine 599) interacts with Mg(2+). Phenylalanine 603 and asparagine 606 together coordinate Na(+). Substrate contacts are provided by asparagine 606 and tryptophan 1004.

It belongs to the glycosyl hydrolase 2 family. As to quaternary structure, homotetramer. Mg(2+) is required as a cofactor. The cofactor is Na(+).

The enzyme catalyses Hydrolysis of terminal non-reducing beta-D-galactose residues in beta-D-galactosides.. The sequence is that of Beta-galactosidase from Enterobacter sp. (strain 638).